We begin with the raw amino-acid sequence, 176 residues long: Nucleoside triphosphate/diphosphate phosphatase (176 aa).

R23 functions as the Proton donor in the catalytic mechanism. Residues N87, D103, D105, D107, D120, and E123 each contribute to the Mg(2+) site.

This sequence belongs to the Ntdp family. The cofactor is Mg(2+).

It catalyses the reaction a ribonucleoside 5'-triphosphate + H2O = a ribonucleoside 5'-diphosphate + phosphate + H(+). The catalysed reaction is a ribonucleoside 5'-diphosphate + H2O = a ribonucleoside 5'-phosphate + phosphate + H(+). In terms of biological role, has nucleoside phosphatase activity towards nucleoside triphosphates and nucleoside diphosphates. The sequence is that of Nucleoside triphosphate/diphosphate phosphatase from Bacillus velezensis (strain DSM 23117 / BGSC 10A6 / LMG 26770 / FZB42) (Bacillus amyloliquefaciens subsp. plantarum).